The sequence spans 90 residues: Small ribosomal subunit protein bS18B (90 aa).

This sequence belongs to the bacterial ribosomal protein bS18 family. Part of the 30S ribosomal subunit. Forms a tight heterodimer with protein bS6.

In terms of biological role, binds as a heterodimer with protein bS6 to the central domain of the 16S rRNA, where it helps stabilize the platform of the 30S subunit. The polypeptide is Small ribosomal subunit protein bS18B (Roseiflexus sp. (strain RS-1)).